The sequence spans 421 residues: Tubulin gamma-3 chain (421 aa).

94 to 100 is a binding site for GTP; it reads AGGTGSG.

Belongs to the tubulin family.

The protein localises to the cytoplasm. The protein resides in the cytoskeleton. It is found in the microtubule organizing center. Its function is as follows. Tubulin is the major constituent of microtubules. The gamma chain is found at microtubule organizing centers (MTOC) such as the spindle poles, suggesting that it is involved in the minus-end nucleation of microtubule assembly. This is Tubulin gamma-3 chain (TUBG3) from Zea mays (Maize).